The primary structure comprises 113 residues: Putative anti-sigma factor antagonist TM1081 homolog (113 aa).

In terms of domain architecture, STAS spans 1-110 (MFPYKIVEDV…DTISEALEEV (110 aa)). Residue Ser55 is modified to Phosphoserine.

The protein belongs to the anti-sigma-factor antagonist family. In terms of processing, phosphorylated on a serine residue.

In terms of biological role, in the phosphorylated form it could act as an anti-anti-sigma factor that counteracts an anti-sigma factor and thus releases a sigma factor from inhibition. In Thermotoga neapolitana, this protein is Putative anti-sigma factor antagonist TM1081 homolog.